Here is a 341-residue protein sequence, read N- to C-terminus: Methionine import ATP-binding protein MetN (341 aa).

One can recognise an ABC transporter domain in the interval 2–237 (IELCGLKKSF…PESLARKMLY (236 aa)). ATP is bound at residue 34–41 (GKSGAGKS).

The protein belongs to the ABC transporter superfamily. Methionine importer (TC 3.A.1.24) family. The complex is composed of two ATP-binding proteins (MetN), two transmembrane proteins (MetI) and a solute-binding protein (MetQ).

It localises to the cell inner membrane. It catalyses the reaction L-methionine(out) + ATP + H2O = L-methionine(in) + ADP + phosphate + H(+). The enzyme catalyses D-methionine(out) + ATP + H2O = D-methionine(in) + ADP + phosphate + H(+). Its function is as follows. Part of the ABC transporter complex MetNIQ involved in methionine import. Responsible for energy coupling to the transport system. This Legionella pneumophila (strain Lens) protein is Methionine import ATP-binding protein MetN.